The sequence spans 67 residues: Large ribosomal subunit protein bL35 (67 aa).

The protein belongs to the bacterial ribosomal protein bL35 family.

This Rickettsia prowazekii (strain Madrid E) protein is Large ribosomal subunit protein bL35.